Consider the following 786-residue polypeptide: LPS-assembly protein LptD (786 aa).

A signal peptide spans 1 to 39 (MPPKPLFPNVFPGDGAPRKRRLALALLAVPGLVPAVSYA). The disordered stretch occupies residues 767–786 (PGYTPLPPPPPPMSRFSNYE). The span at 770 to 779 (TPLPPPPPPM) shows a compositional bias: pro residues.

It belongs to the LptD family. As to quaternary structure, component of the lipopolysaccharide transport and assembly complex. Interacts with LptE and LptA.

The protein resides in the cell outer membrane. Together with LptE, is involved in the assembly of lipopolysaccharide (LPS) at the surface of the outer membrane. The protein is LPS-assembly protein LptD of Burkholderia lata (strain ATCC 17760 / DSM 23089 / LMG 22485 / NCIMB 9086 / R18194 / 383).